Reading from the N-terminus, the 261-residue chain is MLLLLSPAKSLDYDTPLPPKLPHTLPVFSEQPLELIEVLRRQSPQQLSELMGISDKLAALNVARYEAFSPRFTATNARQALLAFNGDVYEGLQARSLDAEDLDWAQQHLAILSGLYGVLRPLDRMQPYRLEMGTRLETAHGSNLYQFWGSRIAEHLNQRAARQPAGERVIVNLASQEYFKSVDLKHLKPPVVECAFEDYKNGAYKIISFHAKRARGLMARFAIQRRARSAAELEAFDLEGYALAPASSTPARLVFRRKTAD.

This sequence belongs to the UPF0246 family.

This is UPF0246 protein Daci_5283 from Delftia acidovorans (strain DSM 14801 / SPH-1).